The sequence spans 382 residues: Alanine racemase (382 aa).

Lysine 39 (proton acceptor; specific for D-alanine) is an active-site residue. Lysine 39 is subject to N6-(pyridoxal phosphate)lysine. Residue arginine 138 participates in substrate binding. The active-site Proton acceptor; specific for L-alanine is the tyrosine 265. Residue methionine 312 coordinates substrate.

It belongs to the alanine racemase family. Pyridoxal 5'-phosphate is required as a cofactor.

The catalysed reaction is L-alanine = D-alanine. The protein operates within amino-acid biosynthesis; D-alanine biosynthesis; D-alanine from L-alanine: step 1/1. Its function is as follows. Catalyzes the interconversion of L-alanine and D-alanine. May also act on other amino acids. The polypeptide is Alanine racemase (alr) (Staphylococcus saprophyticus subsp. saprophyticus (strain ATCC 15305 / DSM 20229 / NCIMB 8711 / NCTC 7292 / S-41)).